We begin with the raw amino-acid sequence, 471 residues long: 5-hydroxytryptamine receptor 2B (471 aa).

At 1–26 (MFQAAVGPLQTNISLPEETPGLELNW) the chain is on the extracellular side. Asn12 is a glycosylation site (N-linked (GlcNAc...) asparagine). The chain crosses the membrane as a helical span at residues 27 to 49 (AALLIVMVIIPTIGGNILVILAV). The Cytoplasmic segment spans residues 50–60 (WLEKKLQNATN). The helical transmembrane segment at 61–83 (FFLMSLAVADLLVGLLVMPIALI) threads the bilayer. At 84–99 (TILYDSDWPLPEPLCP) the chain is on the extracellular side. Cys98 and Cys182 are disulfide-bonded. Residues 100-121 (IWLFLDVLFSTASIMHLCAISL) form a helical membrane-spanning segment. Ergotamine-binding residues include Asp105 and Thr110. The short motif at 122–124 (DRY) is the DRY motif; important for ligand-induced conformation changes element. Residues 122 to 141 (DRYIAIKKPIQHSQYKSRAK) lie on the Cytoplasmic side of the membrane. A helical membrane pass occupies residues 142 to 162 (VMLKIALVWLISICIAIPIPI). Topologically, residues 163–191 (KGLRNYPHPNNITFTSNHTCVLKTDTFQE) are extracellular. Asn173 and Asn179 each carry an N-linked (GlcNAc...) asparagine glycan. Residue Leu184 coordinates ergotamine. The short motif at 187–190 (DTFQ) is the [DE]RFG motif; may stabilize a conformation that preferentially activates signaling via beta-arrestin family members element. Residues 192–214 (FIIFGSLVAFFIPLTIMMIIYFL) form a helical membrane-spanning segment. Residues 215–308 (TVRVLRKKVY…TLTNEQRASK (94 aa)) lie on the Cytoplasmic side of the membrane. A helical membrane pass occupies residues 309 to 329 (VLGIVFLLFVVMWCPFFITNI). Residues 330-344 (TSALCGPCDANIIGR) lie on the Extracellular side of the membrane. The cysteines at positions 334 and 337 are disulfide-linked. The chain crosses the membrane as a helical span at residues 345 to 366 (LMEIFSWVGYVSSGINPLVYTL). Residues 360–364 (NPLVY) carry the NPxxY motif; important for ligand-induced conformation changes and signaling motif. Topologically, residues 367–471 (FNKTFRQAFT…CKQEERVSCV (105 aa)) are cytoplasmic. The S-palmitoyl cysteine moiety is linked to residue Cys381. The short motif at 469-471 (SCV) is the PDZ-binding element.

The protein belongs to the G-protein coupled receptor 1 family. As to expression, detected in brain, heart and gut.

The protein localises to the cell membrane. It localises to the synapse. It is found in the synaptosome. In terms of biological role, G-protein coupled receptor for 5-hydroxytryptamine (serotonin). Also functions as a receptor for various ergot alkaloid derivatives and psychoactive substances. Ligand binding causes a conformation change that triggers signaling via guanine nucleotide-binding proteins (G proteins) and modulates the activity of downstream effectors. HTR2B is coupled to G(q)/G(11) G alpha proteins and activates phospholipase C-beta, releasing diacylglycerol (DAG) and inositol 1,4,5-trisphosphate (IP3) second messengers that modulate the activity of phosphatidylinositol 3-kinase and promote the release of Ca(2+) ions from intracellular stores, respectively. Beta-arrestin family members inhibit signaling via G proteins and mediate activation of alternative signaling pathways. Plays a role in the regulation of dopamine and 5-hydroxytryptamine release, 5-hydroxytryptamine uptake and in the regulation of extracellular dopamine and 5-hydroxytryptamine levels, and thereby affects neural activity. In Dichotomyctere fluviatilis (Green pufferfish), this protein is 5-hydroxytryptamine receptor 2B (htr2b).